We begin with the raw amino-acid sequence, 577 residues long: Aspartate--tRNA ligase (577 aa).

Residue E169 coordinates L-aspartate. Residues 193-196 (QLYK) form an aspartate region. R215 serves as a coordination point for L-aspartate. Residues 215–217 (RDE) and Q224 contribute to the ATP site. H440 is an L-aspartate binding site. E474 lines the ATP pocket. R481 contacts L-aspartate. 526-529 (GIDR) is a binding site for ATP.

This sequence belongs to the class-II aminoacyl-tRNA synthetase family. Type 1 subfamily. Homodimer.

Its subcellular location is the cytoplasm. It carries out the reaction tRNA(Asp) + L-aspartate + ATP = L-aspartyl-tRNA(Asp) + AMP + diphosphate. Its function is as follows. Catalyzes the attachment of L-aspartate to tRNA(Asp) in a two-step reaction: L-aspartate is first activated by ATP to form Asp-AMP and then transferred to the acceptor end of tRNA(Asp). The chain is Aspartate--tRNA ligase from Mesoplasma florum (strain ATCC 33453 / NBRC 100688 / NCTC 11704 / L1) (Acholeplasma florum).